We begin with the raw amino-acid sequence, 972 residues long: Aminopeptidase Ey (972 aa).

The Cytoplasmic portion of the chain corresponds to Ala-2 to Ser-10. The helical; Signal-anchor for type II membrane protein transmembrane segment at Val-11 to Val-31 threads the bilayer. Residues Val-32 to Ser-972 lie on the Extracellular side of the membrane. A cytosolic Ser/Thr-rich junction region spans residues Tyr-33–Asn-72. The tract at residues Lys-37–Arg-77 is disordered. An N-linked (GlcNAc...) asparagine glycan is attached at Asn-38. The segment covering Ser-47–Ala-70 has biased composition (low complexity). Positions Asn-73–Ala-967 are metalloprotease. Asn-110, Asn-132, Asn-147, Asn-206, Asn-269, and Asn-296 each carry an N-linked (GlcNAc...) asparagine glycan. Gly-355 to Asn-359 is a binding site for substrate. His-391 lines the Zn(2+) pocket. Catalysis depends on Glu-392, which acts as the Proton acceptor. Positions 395 and 414 each coordinate Zn(2+). Asn-513, Asn-574, Asn-584, Asn-628, Asn-684, and Asn-742 each carry an N-linked (GlcNAc...) asparagine glycan. A disulfide bond links Cys-764 and Cys-771. The N-linked (GlcNAc...) asparagine glycan is linked to Asn-785. An intrachain disulfide couples Cys-801 to Cys-837.

This sequence belongs to the peptidase M1 family. As to quaternary structure, homodimer. Requires Zn(2+) as cofactor. Detected in the plasma and granule fractions of egg yolk (at protein level).

The protein localises to the cell membrane. It carries out the reaction Differs from other aminopeptidases in broad specificity for amino acids in the P1 position and the ability to hydrolyze peptides of four or five residues that contain Pro in the P1' position.. In terms of biological role, broad specificity aminopeptidase. Degrades a variety of peptides possessing various N-terminal amino acids including hydrophobic, basic and acidic amino acids. Preferentially hydrolyzes small peptides consisting of 4 or 5 amino acids. Hydrolyzes the N-terminal Xaa-Pro bonds in the chicken brain peptide Leu-Pro-Leu-Arg-PheNH2, the substance P fragment Arg-Pro-Lys-Pro and the bradykinin fragment Arg-Pro-Pro-Gly-Phe. Hydrolyzes the N-formylated peptides fMet-Leu-Phe, fMet-Ala-Gly-Ser-Glu and fMet-Nle-Leu-Phe-Nle-Tyr-Lys, but does not hydrolyze peptides with acetylation or pyroglutamic acid at N-terminus. Does not hydrolyze large peptides such as complete substance P, bradykinin or schistoFLRFamide. In Gallus gallus (Chicken), this protein is Aminopeptidase Ey (ANPEP).